The sequence spans 1000 residues: C2 domain-containing protein 5 (1000 aa).

Residues 1-109 (MPGKLKVKIV…EAATVISGWF (109 aa)) enclose the C2 domain. Positions 19, 26, 76, 78, 81, and 84 each coordinate Ca(2+). A Phosphoserine; by PKB/AKT2 modification is found at Ser197. Phosphoserine occurs at positions 200 and 260. Residues 265–330 (MKEIPFNEDP…SGSAGKEGGP (66 aa)) form a disordered region. Residues 274-289 (PNPNTHSSGPSTPLKN) show a composition bias toward polar residues. Residues 290-318 (QTYSFSPSKSYSRQSSSSDTDLSLTPKTG) show a composition bias toward low complexity. Residues Ser293, Ser295, Ser304, Ser305, and Ser306 each carry the phosphoserine modification. The residue at position 317 (Thr317) is a Phosphothreonine. A compositionally biased stretch (gly residues) spans 319 to 328 (MGSGSAGKEG). Ser323 bears the Phosphoserine mark. Thr601 carries the post-translational modification Phosphothreonine. The segment at 639–669 (EIIGSPIPEPRQRSRLLRSQSESSDEVTELD) is disordered. Ser643, Ser657, Ser659, Ser661, and Ser662 each carry phosphoserine. Position 666 is a phosphothreonine (Thr666). The residue at position 671 (Ser671) is a Phosphoserine. At Thr807 the chain carries Phosphothreonine. Phosphoserine occurs at positions 817 and 852.

The cofactor is Ca(2+). In terms of processing, phosphorylated on Ser-197 by active myristoylated kinase AKT2; insulin-stimulated phosphorylation by AKT2 regulates SLC2A4/GLUT4 translocation into the plasma membrane.

Its subcellular location is the cytoplasmic vesicle membrane. It localises to the cytoplasm. The protein localises to the cell cortex. The protein resides in the cell membrane. It is found in the cell projection. Its subcellular location is the ruffle. Functionally, required for insulin-stimulated glucose transport and glucose transporter SLC2A4/GLUT4 translocation from intracellular glucose storage vesicle (GSV) to the plasma membrane (PM) in adipocytes. Binds phospholipid membranes in a calcium-dependent manner and is necessary for the optimal membrane fusion between SLC2A4/GLUT4 GSV and the PM. This chain is C2 domain-containing protein 5 (C2CD5), found in Homo sapiens (Human).